The primary structure comprises 349 residues: MISVGIVGGTGYTGVELLRILLRHPKAQVRVLTSRTEAGKPVADMFPNLRGHTDLQFSDLNIDALKECDVVFFATPHGVAMQHAKDLIAAGTKVIDLAADFRLQNLEQFEKWYGMEHACPDVLKDSVYGLTELNREKIKQAQVIGNPGCYPTTVQLGLAPLLKSAQALIETKNIIIDAKSGVSGAGRKASLGMIYSENADNFKAYGVAGHRHHPEIVEALENIAGKKDVFEGLLFVPHLVPMIRGMLSTIYVDLTEAGKQTALQALYENFYANEKFVDVMPANSSPETRSVRGANELRIALYKPQPNKLIILAAQDNLVKGASGQAVQNMNLMFGFNEDEGLQGIGLLP.

Cys149 is a catalytic residue.

Belongs to the NAGSA dehydrogenase family. Type 1 subfamily.

The protein resides in the cytoplasm. The enzyme catalyses N-acetyl-L-glutamate 5-semialdehyde + phosphate + NADP(+) = N-acetyl-L-glutamyl 5-phosphate + NADPH + H(+). It functions in the pathway amino-acid biosynthesis; L-arginine biosynthesis; N(2)-acetyl-L-ornithine from L-glutamate: step 3/4. In terms of biological role, catalyzes the NADPH-dependent reduction of N-acetyl-5-glutamyl phosphate to yield N-acetyl-L-glutamate 5-semialdehyde. This chain is N-acetyl-gamma-glutamyl-phosphate reductase, found in Acinetobacter baumannii (strain AB307-0294).